We begin with the raw amino-acid sequence, 428 residues long: 2,3-bisphosphoglycerate-independent phosphoglycerate mutase 2 (428 aa).

Belongs to the BPG-independent phosphoglycerate mutase family. A-PGAM subfamily.

The enzyme catalyses (2R)-2-phosphoglycerate = (2R)-3-phosphoglycerate. It participates in carbohydrate degradation; glycolysis; pyruvate from D-glyceraldehyde 3-phosphate: step 3/5. Functionally, catalyzes the interconversion of 2-phosphoglycerate and 3-phosphoglycerate. The sequence is that of 2,3-bisphosphoglycerate-independent phosphoglycerate mutase 2 (apgM2) from Methanocaldococcus jannaschii (strain ATCC 43067 / DSM 2661 / JAL-1 / JCM 10045 / NBRC 100440) (Methanococcus jannaschii).